The chain runs to 379 residues: Acetylajmalan esterase 1 (379 aa).

An N-terminal signal peptide occupies residues 1-20 (MGFAPLLVFSLFVFAGTTKG). Ser34 (nucleophile) is an active-site residue. Asn96, Asn178, Asn197, and Asn291 each carry an N-linked (GlcNAc...) asparagine glycan. Residues Asp332 and His335 contribute to the active site.

It belongs to the 'GDSL' lipolytic enzyme family. In terms of tissue distribution, expressed in roots and leaves at low levels.

It carries out the reaction 17-O-acetylnorajmaline + H2O = norajmaline + acetate + H(+). The catalysed reaction is 17-O-acetylajmaline + H2O = ajmaline + acetate + H(+). It functions in the pathway alkaloid biosynthesis; ajmaline biosynthesis. In terms of biological role, acetylesterase involved in the biosynthesis of ajmaline-type monoterpenoid indole alkaloids (MIAs) natural products, important plant-derived pharmaceuticals used in the therapy of heart disorders. Deacetylates 17-O-acetylnorajmaline to produce norajmaline. May also catalyze the conversion of 17-O-acetylajmaline to ajmaline. The protein is Acetylajmalan esterase 1 of Rauvolfia serpentina (Serpentine wood).